The following is a 421-amino-acid chain: D-amino acid dehydrogenase (421 aa).

An FAD-binding site is contributed by 3 to 17; sequence VLVLGGGVVGVASAY.

The protein belongs to the DadA oxidoreductase family. FAD serves as cofactor.

It catalyses the reaction a D-alpha-amino acid + A + H2O = a 2-oxocarboxylate + AH2 + NH4(+). The protein operates within amino-acid degradation; D-alanine degradation; NH(3) and pyruvate from D-alanine: step 1/1. Its function is as follows. Oxidative deamination of D-amino acids. This is D-amino acid dehydrogenase from Methylobacterium nodulans (strain LMG 21967 / CNCM I-2342 / ORS 2060).